A 208-amino-acid polypeptide reads, in one-letter code: LexA repressor (208 aa).

The H-T-H motif DNA-binding region spans 28–48 (VREIGEAVGLASSSTVHGHLA). Residues Ser130 and Lys168 each act as for autocatalytic cleavage activity in the active site.

It belongs to the peptidase S24 family. As to quaternary structure, homodimer.

The catalysed reaction is Hydrolysis of Ala-|-Gly bond in repressor LexA.. Functionally, represses a number of genes involved in the response to DNA damage (SOS response), including recA and lexA. In the presence of single-stranded DNA, RecA interacts with LexA causing an autocatalytic cleavage which disrupts the DNA-binding part of LexA, leading to derepression of the SOS regulon and eventually DNA repair. This chain is LexA repressor, found in Shouchella clausii (strain KSM-K16) (Alkalihalobacillus clausii).